A 341-amino-acid polypeptide reads, in one-letter code: Killer cell immunoglobulin-like receptor 2DL3 (341 aa).

Positions 1 to 21 (MSLMVVSMVCVGFFLLQGAWP) are cleaved as a signal peptide. At 22–245 (HEGVHRKPSL…SETGNPRHLH (224 aa)) the chain is on the extracellular side. 2 Ig-like C2-type domains span residues 42–107 (EETV…VTHS) and 142–205 (GESV…FRDS). Intrachain disulfides connect C49-C100 and C149-C198. Residues N84, N178, and N211 are each glycosylated (N-linked (GlcNAc...) asparagine). A disordered region spans residues 220-239 (VTGNPSNSWPSPTEPSSETG). The span at 223–239 (NPSNSWPSPTEPSSETG) shows a compositional bias: low complexity. A helical transmembrane segment spans residues 246–265 (VLIGTSVVIILFILLLFFLL). Residues 266 to 341 (HRWCCNKKNA…VYTELPNAEP (76 aa)) are Cytoplasmic-facing.

It belongs to the immunoglobulin superfamily. Interacts with ARRB2.

The protein resides in the cell membrane. Receptor on natural killer (NK) cells for HLA-C alleles (HLA-Cw1, HLA-Cw3 and HLA-Cw7). Inhibits the activity of NK cells thus preventing cell lysis. The chain is Killer cell immunoglobulin-like receptor 2DL3 from Homo sapiens (Human).